Here is a 92-residue protein sequence, read N- to C-terminus: DNA-directed RNA polymerase subunit omega (92 aa).

It belongs to the RNA polymerase subunit omega family. The RNAP catalytic core consists of 2 alpha, 1 beta, 1 beta' and 1 omega subunit. When a sigma factor is associated with the core the holoenzyme is formed, which can initiate transcription.

It catalyses the reaction RNA(n) + a ribonucleoside 5'-triphosphate = RNA(n+1) + diphosphate. Its function is as follows. Promotes RNA polymerase assembly. Latches the N- and C-terminal regions of the beta' subunit thereby facilitating its interaction with the beta and alpha subunits. The protein is DNA-directed RNA polymerase subunit omega of Corynebacterium diphtheriae (strain ATCC 700971 / NCTC 13129 / Biotype gravis).